The primary structure comprises 225 residues: Biosynthetic peptidoglycan transglycosylase (225 aa).

Residues isoleucine 12–phenylalanine 32 form a helical membrane-spanning segment.

This sequence belongs to the glycosyltransferase 51 family.

It is found in the cell inner membrane. The enzyme catalyses [GlcNAc-(1-&gt;4)-Mur2Ac(oyl-L-Ala-gamma-D-Glu-L-Lys-D-Ala-D-Ala)](n)-di-trans,octa-cis-undecaprenyl diphosphate + beta-D-GlcNAc-(1-&gt;4)-Mur2Ac(oyl-L-Ala-gamma-D-Glu-L-Lys-D-Ala-D-Ala)-di-trans,octa-cis-undecaprenyl diphosphate = [GlcNAc-(1-&gt;4)-Mur2Ac(oyl-L-Ala-gamma-D-Glu-L-Lys-D-Ala-D-Ala)](n+1)-di-trans,octa-cis-undecaprenyl diphosphate + di-trans,octa-cis-undecaprenyl diphosphate + H(+). It participates in cell wall biogenesis; peptidoglycan biosynthesis. In terms of biological role, peptidoglycan polymerase that catalyzes glycan chain elongation from lipid-linked precursors. The sequence is that of Biosynthetic peptidoglycan transglycosylase from Marinomonas sp. (strain MWYL1).